Consider the following 216-residue polypeptide: Thiamine-phosphate synthase (216 aa).

Residues 41–45 (QYREK) and N73 each bind 4-amino-2-methyl-5-(diphosphooxymethyl)pyrimidine. Residues D74 and D93 each contribute to the Mg(2+) site. A 4-amino-2-methyl-5-(diphosphooxymethyl)pyrimidine-binding site is contributed by S111. 137-139 (TTT) contacts 2-[(2R,5Z)-2-carboxy-4-methylthiazol-5(2H)-ylidene]ethyl phosphate. Residue K140 coordinates 4-amino-2-methyl-5-(diphosphooxymethyl)pyrimidine. 2-[(2R,5Z)-2-carboxy-4-methylthiazol-5(2H)-ylidene]ethyl phosphate contacts are provided by residues G168 and 188 to 189 (VS).

The protein belongs to the thiamine-phosphate synthase family. Mg(2+) is required as a cofactor.

The enzyme catalyses 2-[(2R,5Z)-2-carboxy-4-methylthiazol-5(2H)-ylidene]ethyl phosphate + 4-amino-2-methyl-5-(diphosphooxymethyl)pyrimidine + 2 H(+) = thiamine phosphate + CO2 + diphosphate. It catalyses the reaction 2-(2-carboxy-4-methylthiazol-5-yl)ethyl phosphate + 4-amino-2-methyl-5-(diphosphooxymethyl)pyrimidine + 2 H(+) = thiamine phosphate + CO2 + diphosphate. It carries out the reaction 4-methyl-5-(2-phosphooxyethyl)-thiazole + 4-amino-2-methyl-5-(diphosphooxymethyl)pyrimidine + H(+) = thiamine phosphate + diphosphate. It functions in the pathway cofactor biosynthesis; thiamine diphosphate biosynthesis; thiamine phosphate from 4-amino-2-methyl-5-diphosphomethylpyrimidine and 4-methyl-5-(2-phosphoethyl)-thiazole: step 1/1. In terms of biological role, condenses 4-methyl-5-(beta-hydroxyethyl)thiazole monophosphate (THZ-P) and 2-methyl-4-amino-5-hydroxymethyl pyrimidine pyrophosphate (HMP-PP) to form thiamine monophosphate (TMP). This chain is Thiamine-phosphate synthase, found in Chloroflexus aurantiacus (strain ATCC 29366 / DSM 635 / J-10-fl).